Consider the following 483-residue polypeptide: ATP synthase subunit beta, chloroplastic (483 aa).

Residue G163–T170 participates in ATP binding.

Belongs to the ATPase alpha/beta chains family. In terms of assembly, F-type ATPases have 2 components, CF(1) - the catalytic core - and CF(0) - the membrane proton channel. CF(1) has five subunits: alpha(3), beta(3), gamma(1), delta(1), epsilon(1). CF(0) has four main subunits: a(1), b(1), b'(1) and c(9-12).

The protein resides in the plastid. Its subcellular location is the chloroplast thylakoid membrane. The catalysed reaction is ATP + H2O + 4 H(+)(in) = ADP + phosphate + 5 H(+)(out). Produces ATP from ADP in the presence of a proton gradient across the membrane. The catalytic sites are hosted primarily by the beta subunits. This is ATP synthase subunit beta, chloroplastic from Ostreococcus tauri.